A 64-amino-acid chain; its full sequence is Large ribosomal subunit protein bL35 (64 aa).

Belongs to the bacterial ribosomal protein bL35 family.

The sequence is that of Large ribosomal subunit protein bL35 from Vibrio parahaemolyticus serotype O3:K6 (strain RIMD 2210633).